An 83-amino-acid chain; its full sequence is Small ribosomal subunit protein bS20 (83 aa).

This sequence belongs to the bacterial ribosomal protein bS20 family.

Binds directly to 16S ribosomal RNA. In Staphylococcus aureus (strain JH1), this protein is Small ribosomal subunit protein bS20.